The sequence spans 375 residues: MVDANMGAAGGQFPEFPNIVTHGGQYVQYDIFGNFFEITTKYRPPIMPIGRGAYGIVCSVFNAELNEMVAVKKIANAFDNYMDAKRTLREIKLLRHLDHENVIGLRDVIPPPLRREFSDVYIATELMDTDLHQIIRSNQGLSEDHCQYFMYQLLRGLKYIHSANVIHRDLKPSNLLLNANCDLKICDFGLARPNLENENMTEYVVTRWYRAPELLLNSSDYTEAIDVWSVGCIFMELMNRKPLFAGKDHVHQIRLLTELLGTPTESDLSFLRNEDAKRYIRQLPQHPRQQLAKVFPHVNSLAIELVDKMLTLNPTGRITVEEALAHPYLAKLHDAADEPVCPVPFSFDFEQQGIGEEQIKDMIYQEALVLNPEYA.

Residues 43–329 (RPPIMPIGRG…VEEALAHPYL (287 aa)) form the Protein kinase domain. ATP-binding positions include 49–57 (IGRGAYGIV) and Lys72. Catalysis depends on Asp169, which acts as the Proton acceptor. Thr201 is subject to Phosphothreonine. Positions 201-203 (TEY) match the TXY motif. Residue Tyr203 is modified to Phosphotyrosine. Phosphothreonine is present on Thr206.

This sequence belongs to the protein kinase superfamily. CMGC Ser/Thr protein kinase family. MAP kinase subfamily. Mg(2+) serves as cofactor. Post-translationally, activated by wounding and UV-C in a cultivar-dependent manner; phosphorylated in cv. Pungchon but not in cv. Subicho.

The enzyme catalyses L-seryl-[protein] + ATP = O-phospho-L-seryl-[protein] + ADP + H(+). It catalyses the reaction L-threonyl-[protein] + ATP = O-phospho-L-threonyl-[protein] + ADP + H(+). With respect to regulation, activated by threonine and tyrosine phosphorylation. Stress-inducible protein kinase involved in oxidative stress-mediated and innate immune MAP kinase signaling cascades. In Capsicum annuum (Capsicum pepper), this protein is Mitogen-activated protein kinase 1.